Consider the following 384-residue polypeptide: 23S rRNA (uracil(747)-C(5))-methyltransferase RlmC (384 aa).

Positions 7, 15, 18, and 94 each coordinate [4Fe-4S] cluster. 4 residues coordinate S-adenosyl-L-methionine: Gln219, Phe248, Glu269, and Asn316. The active-site Nucleophile is Cys343.

The protein belongs to the class I-like SAM-binding methyltransferase superfamily. RNA M5U methyltransferase family. RlmC subfamily.

It carries out the reaction uridine(747) in 23S rRNA + S-adenosyl-L-methionine = 5-methyluridine(747) in 23S rRNA + S-adenosyl-L-homocysteine + H(+). Catalyzes the formation of 5-methyl-uridine at position 747 (m5U747) in 23S rRNA. This chain is 23S rRNA (uracil(747)-C(5))-methyltransferase RlmC, found in Shewanella sp. (strain MR-4).